A 643-amino-acid chain; its full sequence is Maternal embryonic leucine zipper kinase (643 aa).

The Protein kinase domain maps to 11–263 (YELYETIGTG…MRNLLNHPWV (253 aa)). ATP contacts are provided by residues 17-25 (IGTGGFAKV) and lysine 40. Threonine 56 carries the post-translational modification Phosphothreonine; by autocatalysis. Aspartate 132 serves as the catalytic Proton acceptor. Tyrosine 163 carries the phosphotyrosine; by autocatalysis modification. Position 167 is a phosphothreonine; by autocatalysis (threonine 167). Phosphoserine; by autocatalysis occurs at positions 171 and 253. The segment at 282 to 321 (LDEDCVTELSVHHRSSRQTMEDLISSWQYDHLTATYLLLL) is UBA-like. The autoinhibitory region stretch occupies residues 326 to 643 (RGKPARLQLL…VEDILSGCKM (318 aa)). Residues serine 336 and serine 343 each carry the phosphoserine; by autocatalysis modification. The residue at position 352 (serine 352) is a Phosphoserine. Residues serine 399 and serine 423 each carry the phosphoserine; by autocatalysis modification. Threonine 486 carries the post-translational modification Phosphothreonine; by autocatalysis. Serine 490 carries the post-translational modification Phosphoserine. Serine 497 carries the post-translational modification Phosphoserine; by autocatalysis. Threonine 510 carries the post-translational modification Phosphothreonine. Serine 521 is modified (phosphoserine; by autocatalysis). The residue at position 531 (threonine 531) is a Phosphothreonine; by autocatalysis. Residues 594–643 (SDFGKVTMQFELEVCQLQRPDVVGIRRQRLKGDAWVYKRLVEDILSGCKM) enclose the KA1 domain.

This sequence belongs to the protein kinase superfamily. CAMK Ser/Thr protein kinase family. SNF1 subfamily. In terms of assembly, monomer. Interacts with ZNF622 and PPP1R8. In terms of processing, autophosphorylated: autophosphorylation of the T-loop at Thr-167 and Ser-171 is required for activation. As to expression, expressed in testis, ovary, thymus, spleen and T-cell. Expressed by neural progenitors: highly enriched in cultures containing multipotent progenitors.

It is found in the cell membrane. It catalyses the reaction L-tyrosyl-[protein] + ATP = O-phospho-L-tyrosyl-[protein] + ADP + H(+). The catalysed reaction is L-seryl-[protein] + ATP = O-phospho-L-seryl-[protein] + ADP + H(+). The enzyme catalyses L-threonyl-[protein] + ATP = O-phospho-L-threonyl-[protein] + ADP + H(+). Activated by autophosphorylation of the T-loop at Thr-167 and Ser-171: in contrast to other members of the SNF1 subfamily, phosphorylation at Thr-167 is not mediated by STK11/LKB1 but via autophosphorylation instead. Inhibited by calcium-binding. Kinase activity is also regulated by reducing agents: dithiothreitol (DTT) or reduced glutathione are required for kinase activity in vitro; such dependence is however not due to the presence of disulfide bonds. Serine/threonine-protein kinase involved in various processes such as cell cycle regulation, self-renewal of stem cells, apoptosis and splicing regulation. Has a broad substrate specificity; phosphorylates BCL2L14, CDC25B, MAP3K5/ASK1 and ZNF622. Acts as an activator of apoptosis by phosphorylating and activating MAP3K5/ASK1. Acts as a regulator of cell cycle, notably by mediating phosphorylation of CDC25B, promoting localization of CDC25B to the centrosome and the spindle poles during mitosis. Plays a key role in cell proliferation. Required for proliferation of embryonic and postnatal multipotent neural progenitors. Phosphorylates and inhibits BCL2L14. Also involved in the inhibition of spliceosome assembly during mitosis by phosphorylating ZNF622, thereby contributing to its redirection to the nucleus. May also play a role in primitive hematopoiesis. This chain is Maternal embryonic leucine zipper kinase (Melk), found in Mus musculus (Mouse).